The sequence spans 168 residues: Crossover junction endodeoxyribonuclease RuvC (168 aa).

Residues Asp-9, Glu-70, and Asp-145 contribute to the active site. Residues Asp-9, Glu-70, and Asp-145 each coordinate Mg(2+).

The protein belongs to the RuvC family. Homodimer which binds Holliday junction (HJ) DNA. The HJ becomes 2-fold symmetrical on binding to RuvC with unstacked arms; it has a different conformation from HJ DNA in complex with RuvA. In the full resolvosome a probable DNA-RuvA(4)-RuvB(12)-RuvC(2) complex forms which resolves the HJ. Mg(2+) is required as a cofactor.

Its subcellular location is the cytoplasm. It catalyses the reaction Endonucleolytic cleavage at a junction such as a reciprocal single-stranded crossover between two homologous DNA duplexes (Holliday junction).. Its function is as follows. The RuvA-RuvB-RuvC complex processes Holliday junction (HJ) DNA during genetic recombination and DNA repair. Endonuclease that resolves HJ intermediates. Cleaves cruciform DNA by making single-stranded nicks across the HJ at symmetrical positions within the homologous arms, yielding a 5'-phosphate and a 3'-hydroxyl group; requires a central core of homology in the junction. The consensus cleavage sequence is 5'-(A/T)TT(C/G)-3'. Cleavage occurs on the 3'-side of the TT dinucleotide at the point of strand exchange. HJ branch migration catalyzed by RuvA-RuvB allows RuvC to scan DNA until it finds its consensus sequence, where it cleaves and resolves the cruciform DNA. The sequence is that of Crossover junction endodeoxyribonuclease RuvC from Chlamydia felis (strain Fe/C-56) (Chlamydophila felis).